A 554-amino-acid polypeptide reads, in one-letter code: MATDMSQGELIHPKALPLIVGAQLIHADKLGEKAEDTTMPIRRAVNSTRETPPKSKLAEGEEEKPEPDGSSEESISTVEEQENETPPATSSEAEQPKGEPESGEKEENNNKSAEEPKKDEKDQSKEKEKKVKKTIPAWATLSASQLARAQRQTPMASSPRPKMDAILTEAIKACFQKTGASVVAIRKYIIHKYPSLGLERRGYLLKQALKRELNRGVIRQVKGKGASGSFVVVQKSKPPQKSKNRKKGSALDPEPQVKLEDVLPLAFTRLCEPKEASYSLIRKYVSQYYPKLRVDIRPQLLKNALQRAVERGQLEQITGKGASGTFQLKKSGEKPLLGGSLMEYAILSAIAAMNEPKTCSTTALKKYVLENHPGANSNYQMHLLKKTLQKCEKNGWLEQISGKGFSGTFQLSFPYYPSPGVLFPKKESGGSDDEDEDDDDDESSEDSEDEEPPPKRSLQKKTPAKSQGKTASMKQRGSKPARKVPAAQRGKVRPLPKKAPPKAKTPARKARPSPSVIKKPSGSSSRKPIASARKEAKLPGKGKSAMKKSFKTKK.

N-acetylalanine is present on Ala2. Ser6 carries the phosphoserine modification. Disordered regions lie at residues 30-136 (LGEK…KTIP) and 142-161 (SASQ…SPRP). Residue Thr51 is modified to Phosphothreonine. The segment covering 60-71 (GEEEKPEPDGSS) has biased composition (acidic residues). Lys64 is covalently cross-linked (Glycyl lysine isopeptide (Lys-Gly) (interchain with G-Cter in SUMO2)). 2 positions are modified to phosphothreonine: Glu72 and Thr85. Residues 72-93 (EESISTVEEQENETPPATSSEA) show a composition bias toward polar residues. A compositionally biased stretch (basic and acidic residues) spans 94–129 (EQPKGEPESGEKEENNNKSAEEPKKDEKDQSKEKEK). Lys97 participates in a covalent cross-link: Glycyl lysine isopeptide (Lys-Gly) (interchain with G-Cter in SUMO2). Polar residues predominate over residues 142 to 156 (SASQLARAQRQTPMA). A phosphoserine mark is found at Ser144, Ser157, and Ser158. The 76-residue stretch at 159–234 (PRPKMDAILT…GASGSFVVVQ (76 aa)) folds into the H15 1 domain. Lys192 is modified (N6-acetyllysine). Residues 229–254 (SFVVVQKSKPPQKSKNRKKGSALDPE) form a disordered region. Residues 238 to 248 (PPQKSKNRKKG) show a composition bias toward basic residues. Phosphoserine is present on Ser249. A PxVxL motif motif is present at residues 255–259 (PQVKL). H15 domains lie at 255 to 330 (PQVK…QLKK) and 337 to 413 (LGGS…QLSF). A Glycyl lysine isopeptide (Lys-Gly) (interchain with G-Cter in SUMO2) cross-link involves residue Lys258. A disordered region spans residues 420–554 (GVLFPKKESG…AMKKSFKTKK (135 aa)). Residues 430 to 451 (GSDDEDEDDDDDESSEDSEDEE) show a composition bias toward acidic residues. Ser443, Ser444, and Ser447 each carry phosphoserine. A compositionally biased stretch (polar residues) spans 464-475 (AKSQGKTASMKQ). Basic residues-rich tracts occupy residues 490-511 (GKVR…RKAR) and 544-554 (SAMKKSFKTKK).

Interacts (via PxVxL motif) with CBX5 (via Trp-174).

It is found in the nucleus. The protein resides in the chromosome. In terms of biological role, component of heterochromatin that maintains heterochromatin integrity during G1/S progression and regulates the duration of G1 phase to critically influence cell proliferative capacity. May play a role in hypoxia-induced oncogenesis. The chain is Heterochromatin protein 1-binding protein 3 (Hp1bp3) from Mus musculus (Mouse).